A 277-amino-acid polypeptide reads, in one-letter code: 2-dehydro-3-deoxyphosphooctonate aldolase (277 aa).

This sequence belongs to the KdsA family.

It localises to the cytoplasm. It catalyses the reaction D-arabinose 5-phosphate + phosphoenolpyruvate + H2O = 3-deoxy-alpha-D-manno-2-octulosonate-8-phosphate + phosphate. It participates in carbohydrate biosynthesis; 3-deoxy-D-manno-octulosonate biosynthesis; 3-deoxy-D-manno-octulosonate from D-ribulose 5-phosphate: step 2/3. The protein operates within bacterial outer membrane biogenesis; lipopolysaccharide biosynthesis. This is 2-dehydro-3-deoxyphosphooctonate aldolase from Brucella canis (strain ATCC 23365 / NCTC 10854 / RM-666).